The chain runs to 897 residues: Valine--tRNA ligase (897 aa).

The 'HIGH' region signature appears at 46–56 (PNVTGSLHMGH). The 'KMSKS' region signature appears at 532–536 (KMSKT). Lys535 provides a ligand contact to ATP. Residues 839–897 (LRRSLEKLDKESGVLAARLDNASYLANAPAELVTESRAKLAEQRAQAAILAEQLARLEN) are a coiled coil.

The protein belongs to the class-I aminoacyl-tRNA synthetase family. ValS type 1 subfamily. As to quaternary structure, monomer.

It localises to the cytoplasm. The catalysed reaction is tRNA(Val) + L-valine + ATP = L-valyl-tRNA(Val) + AMP + diphosphate. Functionally, catalyzes the attachment of valine to tRNA(Val). As ValRS can inadvertently accommodate and process structurally similar amino acids such as threonine, to avoid such errors, it has a 'posttransfer' editing activity that hydrolyzes mischarged Thr-tRNA(Val) in a tRNA-dependent manner. The polypeptide is Valine--tRNA ligase (Gloeobacter violaceus (strain ATCC 29082 / PCC 7421)).